Here is a 277-residue protein sequence, read N- to C-terminus: Uridine-cytidine kinase 1 (277 aa).

The interval 1-30 (MASAGGGGSESAAPEADRPQPRPFLIGVSG) is disordered. Residue 30-38 (GGTASGKST) coordinates ATP. Residues Asp87, Tyr115, His120, Arg169, Arg178, and Gln186 each contribute to the substrate site. An ATP-binding site is contributed by Asp215. Residues 238–250 (RHRGGPNGRNHKR) are compositionally biased toward basic residues. The tract at residues 238 to 277 (RHRGGPNGRNHKRTFPEPGDHPGVLATGKRSHLESSSRPH) is disordered. The residue at position 251 (Thr251) is a Phosphothreonine. The segment covering 268–277 (SHLESSSRPH) has biased composition (basic and acidic residues).

This sequence belongs to the uridine kinase family.

It catalyses the reaction uridine + ATP = UMP + ADP + H(+). The catalysed reaction is cytidine + ATP = CMP + ADP + H(+). It participates in pyrimidine metabolism; CTP biosynthesis via salvage pathway; CTP from cytidine: step 1/3. It functions in the pathway pyrimidine metabolism; UMP biosynthesis via salvage pathway; UMP from uridine: step 1/1. Functionally, phosphorylates uridine and cytidine to uridine monophosphate and cytidine monophosphate. Does not phosphorylate deoxyribonucleosides or purine ribonucleosides. Can use ATP or GTP as a phosphate donor. This chain is Uridine-cytidine kinase 1 (Uck1), found in Mus musculus (Mouse).